Consider the following 135-residue polypeptide: Protein NrdI (135 aa).

It belongs to the NrdI family.

Probably involved in ribonucleotide reductase function. This is Protein NrdI from Brucella abortus (strain S19).